A 295-amino-acid chain; its full sequence is Energy-coupling factor transporter ATP-binding protein EcfA2 (295 aa).

The 244-residue stretch at 3-246 (ITFKQVDFTY…PAWLTAHQLG (244 aa)) folds into the ABC transporter domain. 40–47 (GHTGSGKS) provides a ligand contact to ATP.

This sequence belongs to the ABC transporter superfamily. Energy-coupling factor EcfA family. As to quaternary structure, forms a stable energy-coupling factor (ECF) transporter complex composed of 2 membrane-embedded substrate-binding proteins (S component), 2 ATP-binding proteins (A component) and 2 transmembrane proteins (T component).

The protein localises to the cell membrane. ATP-binding (A) component of a common energy-coupling factor (ECF) ABC-transporter complex. Unlike classic ABC transporters this ECF transporter provides the energy necessary to transport a number of different substrates. The chain is Energy-coupling factor transporter ATP-binding protein EcfA2 from Lactiplantibacillus plantarum (strain ATCC BAA-793 / NCIMB 8826 / WCFS1) (Lactobacillus plantarum).